The sequence spans 182 residues: MMDSRLKLIQDWLLQLLAEMTVSDPDGNEHEVFLVDIEVHSNKTIDIIEVFADTDSGISVENCKFLSKHISAELDASEEMQALLPRHFKLVVSSPGLSRPLTMNRQYKKNIGRLMQVTYQNADGEIKTIDGRFISLEEEAEASITLDITKIQKSKPNAKPKPPELVTIPFSQIQKAIVQVEF.

This sequence belongs to the RimP family.

The protein resides in the cytoplasm. Functionally, required for maturation of 30S ribosomal subunits. This Chloroherpeton thalassium (strain ATCC 35110 / GB-78) protein is Ribosome maturation factor RimP.